The sequence spans 656 residues: ATP-dependent zinc metalloprotease FtsH (656 aa).

Residues 1 to 45 (MAIFARRIGLNQHSAYGSRQRVIVMKNFGKKALIKQQSPKRVAWT) lie on the Cytoplasmic side of the membrane. Residues 46-66 (GALAASLIMLPTMFGGNPVLA) traverse the membrane as a helical segment. Residues 67-147 (QKAERESLSY…EISSANSRAA (81 aa)) lie on the Lumenal side of the membrane. The chain crosses the membrane as a helical span at residues 148–168 (VGLLINLMWILPLVALMLLFL). Topologically, residues 169-656 (RRSTNASSQA…DEQLSMVNSQ (488 aa)) are cytoplasmic. 239 to 246 (GPPGTGKT) provides a ligand contact to ATP. Position 460 (His460) interacts with Zn(2+). Glu461 is a catalytic residue. Zn(2+) is bound by residues His464 and Asp538.

It in the central section; belongs to the AAA ATPase family. The protein in the C-terminal section; belongs to the peptidase M41 family. Homohexamer. Zn(2+) is required as a cofactor.

Its subcellular location is the cellular thylakoid membrane. Its function is as follows. Acts as a processive, ATP-dependent zinc metallopeptidase for both cytoplasmic and membrane proteins. Plays a role in the quality control of integral membrane proteins. The polypeptide is ATP-dependent zinc metalloprotease FtsH (Nostoc sp. (strain PCC 7120 / SAG 25.82 / UTEX 2576)).